A 957-amino-acid polypeptide reads, in one-letter code: Glycine dehydrogenase (decarboxylating) (957 aa).

At Lys708 the chain carries N6-(pyridoxal phosphate)lysine.

Belongs to the GcvP family. In terms of assembly, the glycine cleavage system is composed of four proteins: P, T, L and H. Pyridoxal 5'-phosphate serves as cofactor.

It catalyses the reaction N(6)-[(R)-lipoyl]-L-lysyl-[glycine-cleavage complex H protein] + glycine + H(+) = N(6)-[(R)-S(8)-aminomethyldihydrolipoyl]-L-lysyl-[glycine-cleavage complex H protein] + CO2. In terms of biological role, the glycine cleavage system catalyzes the degradation of glycine. The P protein binds the alpha-amino group of glycine through its pyridoxal phosphate cofactor; CO(2) is released and the remaining methylamine moiety is then transferred to the lipoamide cofactor of the H protein. The polypeptide is Glycine dehydrogenase (decarboxylating) (Shigella flexneri).